Reading from the N-terminus, the 330-residue chain is Phosphate acyltransferase (330 aa).

This sequence belongs to the PlsX family. As to quaternary structure, homodimer. Probably interacts with PlsY.

The protein localises to the cytoplasm. The catalysed reaction is a fatty acyl-[ACP] + phosphate = an acyl phosphate + holo-[ACP]. Its pathway is lipid metabolism; phospholipid metabolism. Catalyzes the reversible formation of acyl-phosphate (acyl-PO(4)) from acyl-[acyl-carrier-protein] (acyl-ACP). This enzyme utilizes acyl-ACP as fatty acyl donor, but not acyl-CoA. The sequence is that of Phosphate acyltransferase from Streptococcus agalactiae serotype Ia (strain ATCC 27591 / A909 / CDC SS700).